Reading from the N-terminus, the 77-residue chain is Large ribosomal subunit protein eL14 (77 aa).

Belongs to the eukaryotic ribosomal protein eL14 family.

In Methanococcus vannielii (strain ATCC 35089 / DSM 1224 / JCM 13029 / OCM 148 / SB), this protein is Large ribosomal subunit protein eL14.